The sequence spans 407 residues: uncharacterized protein (407 aa).

Residue Lys-22 forms a Glycyl lysine isopeptide (Lys-Gly) (interchain with G-Cter in ubiquitin) linkage.

The protein belongs to the SVF1 family.

It localises to the cytoplasm. This is an uncharacterized protein from Saccharomyces cerevisiae (strain ATCC 204508 / S288c) (Baker's yeast).